Here is a 35-residue protein sequence, read N- to C-terminus: Z-limacoditoxin(1)-Dv4 (35 aa).

A signal peptide spans 1 to 22; the sequence is MKKTFLPIFLVILLASYALGNP. Glutamine 23 carries the post-translational modification Pyrrolidone carboxylic acid. Proline 32 is modified (proline amide).

Belongs to the limacoditoxin-1 (ACP-like) family. Expressed by the venom secretory cell of the spine. The spine is a cuticular structure containing a single large nucleated venom-secreting cell at its base. It is an independent unit capable of producing, storing and injecting venom. On the back of D.vulnerans caterpillars, spines are grouped together by 50 to 100 to form scoli, of which there are eight in D.vulnerans.

The protein resides in the secreted. In terms of biological role, potently activates insect GPCR. More precisely, it activates the ACP receptor (ACPR) from the mosquito A.aegypti (EC(50)=3.07 nM) with a potency comparable to that of the endogenous ligand. Has no activity on receptors of the closely related neuropeptides adipokinetic hormone and corazonin. In vivo, does not reveal any observable effects when injected into crickets (A.domesticus). Does not induce increase in intracellular calcium in mouse DRG neurons, suggesting that it does not induce pain. The polypeptide is Z-limacoditoxin(1)-Dv4 (Doratifera vulnerans (Mottled cup moth)).